Consider the following 551-residue polypeptide: Glucose-6-phosphate isomerase (551 aa).

Glu-352 (proton donor) is an active-site residue. Catalysis depends on residues His-383 and Lys-511.

Belongs to the GPI family.

The protein localises to the cytoplasm. The enzyme catalyses alpha-D-glucose 6-phosphate = beta-D-fructose 6-phosphate. Its pathway is carbohydrate biosynthesis; gluconeogenesis. It participates in carbohydrate degradation; glycolysis; D-glyceraldehyde 3-phosphate and glycerone phosphate from D-glucose: step 2/4. In terms of biological role, catalyzes the reversible isomerization of glucose-6-phosphate to fructose-6-phosphate. This is Glucose-6-phosphate isomerase from Chlorobium luteolum (strain DSM 273 / BCRC 81028 / 2530) (Pelodictyon luteolum).